A 305-amino-acid polypeptide reads, in one-letter code: MSEEAPHPTRTPAAQRRQIVVITGLSGAGKSNALRAFEDAGYFCIDNLPPRMIPEVMEMSAGSPAGPEGVVVVADIRGRRYFGGELERVIDGVEGAGGWEKRLLFLEADDATLIRRYKESRRPHPAARGGDVLEAIRSERRELAPLRERADVVVDTSGLSALDVRLRFKRLAESLSGRLTVSLISFGFKHGAPLDVDTLFDVRFLPNPHYDPALRPLTGRDPAVREAVLAHPDAREFVERVCGLLSFLIPRYAAEGKTYFTVGVGCTGGRHRSVAIAEELARRLGAGRIGGEVDLYVRHRDLESG.

An ATP-binding site is contributed by 24–31 (GLSGAGKS). Residue 75–78 (DIRG) coordinates GTP.

Belongs to the RapZ-like family.

Its function is as follows. Displays ATPase and GTPase activities. The protein is Nucleotide-binding protein Rxyl_2009 of Rubrobacter xylanophilus (strain DSM 9941 / JCM 11954 / NBRC 16129 / PRD-1).